We begin with the raw amino-acid sequence, 176 residues long: Large ribosomal subunit protein uL16 (176 aa).

It belongs to the universal ribosomal protein uL16 family.

The sequence is that of Large ribosomal subunit protein uL16 from Picrophilus torridus (strain ATCC 700027 / DSM 9790 / JCM 10055 / NBRC 100828 / KAW 2/3).